Here is a 345-residue protein sequence, read N- to C-terminus: MFQQLKQSKDFLALTLAHPQYLTESFEFDLANQVHVEVWDTGVIMFEPLGVKHTKDLVLSCAVHGNETAPIELCNDLMTQLLDEQLVLKQRVLFLIGNPPAIHNGTRFIDENLNRLFNGAHSRGEGLCNPERVRAQKLEQYVDKFFSAHSGERHRMHYDLHTAIRASKHEKFAIYPYRGNRKYSKEQIMFLESCGVNTILFHHEPTTTFSYFSSENYHADAFTIELGKVFPMGQNDMTRFIAMKEMLTLLMCGEELKLPSFDMKRLNLYQVCRSVNKRYDDFEFTFTNDVENFTAFPRGYTLAKEGGFEVKVEHEFESIVFPNAKVPVGQRTVLCLKSADESRLD.

Residues histidine 64, glutamate 67, and histidine 161 each coordinate Zn(2+). The active site involves glutamate 225.

The protein belongs to the AspA/AstE family. Succinylglutamate desuccinylase subfamily. It depends on Zn(2+) as a cofactor.

The catalysed reaction is N-succinyl-L-glutamate + H2O = L-glutamate + succinate. The protein operates within amino-acid degradation; L-arginine degradation via AST pathway; L-glutamate and succinate from L-arginine: step 5/5. Transforms N(2)-succinylglutamate into succinate and glutamate. This chain is Succinylglutamate desuccinylase, found in Shewanella pealeana (strain ATCC 700345 / ANG-SQ1).